The primary structure comprises 303 residues: B1 kinase (303 aa).

The protein belongs to the protein kinase superfamily. Ser/Thr protein kinase family. Poxviruses subfamily. Interacts with host JIP1; this interaction increases the amount of MAPK bound to JIP1 and subsequently increases the activity of transcription factors, such as JUN, that respond to these complexes. Interacts with protein OPG198; this interaction inhibits the repressive activity of OPG198 pseudokinase on viral replication factory formation. Requires Mg(2+) as cofactor. Autophosphorylated.

The protein localises to the virion. Its subcellular location is the host cytoplasm. It carries out the reaction L-seryl-[protein] + ATP = O-phospho-L-seryl-[protein] + ADP + H(+). The catalysed reaction is L-threonyl-[protein] + ATP = O-phospho-L-threonyl-[protein] + ADP + H(+). Functionally, essential serine/threonine-protein kinase that plays different role in the viral life cycle. Phosphorylates the host small ribosomal protein RACK1 thereby customizing the ribosomes to a state optimal for viral mRNAs (which contain poly-A leaders) but not for host mRNAs. Facilitates viral DNA replication by inhibiting host BANF1, a cellular host defense responsive to foreign DNA. Phosphorylates host BANF1 on serine and threonine residues; this leads to BANF1 relocalization to the cytoplasm, loss of dimerization and impaired DNA binding activity. Indeed, BANF1 activity depends on its DNA-binding property which is blocked by VPK1-mediated phosphorylation. Required for viral intermediate genes expression, probably by inhibiting host BANF1. Modulates cellular responses via host JUN by two different mechanisms, either by direct phosphorylation or by modulation of upstream JIP1-MAPK complexes. Seems to participate in the accumulation/processing of late proteins and thus in virion maturation. In addition, inhibits B12 repressive activity on viral DNA replication via a phosphorylation-dependent mechanism. This Cynomys gunnisoni (Gunnison's prairie dog) protein is B1 kinase (OPG187).